The sequence spans 521 residues: Bifunctional purine biosynthesis protein PurH (521 aa).

Positions 1–145 (MIKQALISVS…KNHRDVTVVV (145 aa)) constitute an MGS-like domain.

Belongs to the PurH family.

It catalyses the reaction (6R)-10-formyltetrahydrofolate + 5-amino-1-(5-phospho-beta-D-ribosyl)imidazole-4-carboxamide = 5-formamido-1-(5-phospho-D-ribosyl)imidazole-4-carboxamide + (6S)-5,6,7,8-tetrahydrofolate. The catalysed reaction is IMP + H2O = 5-formamido-1-(5-phospho-D-ribosyl)imidazole-4-carboxamide. It functions in the pathway purine metabolism; IMP biosynthesis via de novo pathway; 5-formamido-1-(5-phospho-D-ribosyl)imidazole-4-carboxamide from 5-amino-1-(5-phospho-D-ribosyl)imidazole-4-carboxamide (10-formyl THF route): step 1/1. It participates in purine metabolism; IMP biosynthesis via de novo pathway; IMP from 5-formamido-1-(5-phospho-D-ribosyl)imidazole-4-carboxamide: step 1/1. The chain is Bifunctional purine biosynthesis protein PurH from Burkholderia pseudomallei (strain 1710b).